The sequence spans 99 residues: DNA-binding protein HU (99 aa).

Residues 67 to 86 (REGRNPKTGAKMKIDAYNQP) form a disordered region.

The protein belongs to the bacterial histone-like protein family. Homodimer.

Functionally, histone-like DNA-binding protein which is capable of wrapping DNA to stabilize it, and thus to prevent its denaturation under extreme environmental conditions. The protein is DNA-binding protein HU (hup) of Rickettsia conorii (strain ATCC VR-613 / Malish 7).